Consider the following 369-residue polypeptide: UDP-N-acetylglucosamine--N-acetylmuramyl-(pentapeptide) pyrophosphoryl-undecaprenol N-acetylglucosamine transferase (369 aa).

Residues 15-17, Asn-126, Arg-169, Ser-197, and Gln-299 each bind UDP-N-acetyl-alpha-D-glucosamine; that span reads TGG.

The protein belongs to the glycosyltransferase 28 family. MurG subfamily.

The protein localises to the cell inner membrane. It carries out the reaction di-trans,octa-cis-undecaprenyl diphospho-N-acetyl-alpha-D-muramoyl-L-alanyl-D-glutamyl-meso-2,6-diaminopimeloyl-D-alanyl-D-alanine + UDP-N-acetyl-alpha-D-glucosamine = di-trans,octa-cis-undecaprenyl diphospho-[N-acetyl-alpha-D-glucosaminyl-(1-&gt;4)]-N-acetyl-alpha-D-muramoyl-L-alanyl-D-glutamyl-meso-2,6-diaminopimeloyl-D-alanyl-D-alanine + UDP + H(+). The protein operates within cell wall biogenesis; peptidoglycan biosynthesis. Cell wall formation. Catalyzes the transfer of a GlcNAc subunit on undecaprenyl-pyrophosphoryl-MurNAc-pentapeptide (lipid intermediate I) to form undecaprenyl-pyrophosphoryl-MurNAc-(pentapeptide)GlcNAc (lipid intermediate II). This Methylorubrum extorquens (strain CM4 / NCIMB 13688) (Methylobacterium extorquens) protein is UDP-N-acetylglucosamine--N-acetylmuramyl-(pentapeptide) pyrophosphoryl-undecaprenol N-acetylglucosamine transferase.